The chain runs to 149 residues: D-aminoacyl-tRNA deacylase (149 aa).

The Gly-cisPro motif, important for rejection of L-amino acids signature appears at 137–138; that stretch reads GP.

Belongs to the DTD family. As to quaternary structure, homodimer.

The protein resides in the cytoplasm. The enzyme catalyses glycyl-tRNA(Ala) + H2O = tRNA(Ala) + glycine + H(+). The catalysed reaction is a D-aminoacyl-tRNA + H2O = a tRNA + a D-alpha-amino acid + H(+). In terms of biological role, an aminoacyl-tRNA editing enzyme that deacylates mischarged D-aminoacyl-tRNAs. Also deacylates mischarged glycyl-tRNA(Ala), protecting cells against glycine mischarging by AlaRS. Acts via tRNA-based rather than protein-based catalysis; rejects L-amino acids rather than detecting D-amino acids in the active site. By recycling D-aminoacyl-tRNA to D-amino acids and free tRNA molecules, this enzyme counteracts the toxicity associated with the formation of D-aminoacyl-tRNA entities in vivo and helps enforce protein L-homochirality. The protein is D-aminoacyl-tRNA deacylase of Syntrophus aciditrophicus (strain SB).